The following is a 3470-amino-acid chain: Dynein axonemal heavy chain 5 (3470 aa).

The segment at 1–1938 is stem; that stretch reads MFRIGRRQLW…MIHITDVAFT (1938 aa). Residues 899 to 918 are disordered; it reads EKVRHENASPNGDTSGGGEG. 4 AAA regions span residues 1939–2161, 2221–2440, 2547–2800, and 2913–3167; these read YQNE…VLRT, TAIS…IQNL, VYPP…IWQG, and LYNE…FRRS. ATP-binding positions include 1977 to 1984 and 2259 to 2266; these read GPAGTGKT and GPSGSGKT. Coiled coils occupy residues 3207–3241 and 3434–3468; these read LKEA…VLKE and HALA…AMTE.

The protein belongs to the dynein heavy chain family. In terms of assembly, interacts with DNAL1. Consists of at least two heavy chains and a number of intermediate and light chains.

Its subcellular location is the cytoplasm. The protein localises to the cytoskeleton. The protein resides in the cilium axoneme. Force generating protein of respiratory cilia. Produces force towards the minus ends of microtubules. Dynein has ATPase activity; the force-producing power stroke is thought to occur on release of ADP. Required for structural and functional integrity of the cilia of ependymal cells lining the brain ventricles. The sequence is that of Dynein axonemal heavy chain 5 from Rattus norvegicus (Rat).